Reading from the N-terminus, the 241-residue chain is Ribosomal RNA small subunit methyltransferase J (241 aa).

S-adenosyl-L-methionine is bound by residues 94-95 (RD) and Asp163.

It belongs to the methyltransferase superfamily. RsmJ family.

It localises to the cytoplasm. It carries out the reaction guanosine(1516) in 16S rRNA + S-adenosyl-L-methionine = N(2)-methylguanosine(1516) in 16S rRNA + S-adenosyl-L-homocysteine + H(+). Its function is as follows. Specifically methylates the guanosine in position 1516 of 16S rRNA. This chain is Ribosomal RNA small subunit methyltransferase J, found in Francisella tularensis subsp. tularensis (strain FSC 198).